Consider the following 178-residue polypeptide: dCTP deaminase (178 aa).

DCTP is bound by residues 99-104 (RSTWAR) and D115. E125 functions as the Proton donor/acceptor in the catalytic mechanism. 2 residues coordinate dCTP: Y157 and Q164.

This sequence belongs to the dCTP deaminase family. As to quaternary structure, homotrimer.

The enzyme catalyses dCTP + H2O + H(+) = dUTP + NH4(+). The protein operates within pyrimidine metabolism; dUMP biosynthesis; dUMP from dCTP (dUTP route): step 1/2. In terms of biological role, catalyzes the deamination of dCTP to dUTP. The sequence is that of dCTP deaminase from Aeropyrum pernix (strain ATCC 700893 / DSM 11879 / JCM 9820 / NBRC 100138 / K1).